Consider the following 241-residue polypeptide: Sugar fermentation stimulation protein homolog (241 aa).

This sequence belongs to the SfsA family.

This chain is Sugar fermentation stimulation protein homolog, found in Hahella chejuensis (strain KCTC 2396).